A 354-amino-acid chain; its full sequence is Guanine nucleotide-binding protein G(q) subunit alpha (354 aa).

2 S-palmitoyl cysteine lipidation sites follow: Cys3 and Cys4. Residues 32–354 (RELKLLLLGT…QLNLKEYNLV (323 aa)) enclose the G-alpha domain. The G1 motif stretch occupies residues 35–48 (KLLLLGTGESGKST). GTP is bound by residues 40 to 47 (GTGESGKS), 174 to 180 (LRVRVPT), 199 to 203 (DVGGQ), 269 to 272 (NKKD), and Ala326. The Mg(2+) site is built by Ser47 and Thr180. Positions 172-180 (DILRVRVPT) are G2 motif. The G3 motif stretch occupies residues 195 to 204 (FRMVDVGGQR). Residues 265–272 (ILFLNKKD) are G4 motif. The tract at residues 324–329 (TCATDT) is G5 motif.

This sequence belongs to the G-alpha family. G(q) subfamily. As to quaternary structure, g proteins are composed of 3 units; alpha, beta and gamma. The alpha chain contains the guanine nucleotide binding site. In terms of tissue distribution, a high concentration was found in the retinal light-sensitive outer segment.

Functionally, guanine nucleotide-binding proteins (G proteins) are involved as modulators or transducers in various transmembrane signaling systems. Its function is as follows. The G(q) alpha subunit is involved in the light-dependent activation of phospholipase C. The protein is Guanine nucleotide-binding protein G(q) subunit alpha of Loligo forbesii (Veined squid).